Consider the following 237-residue polypeptide: MTILPAIDLKDGKAVRLSKGLMESAKIYSDEPWQVAKRFEELGSEWVHLVDLNGAFAGKPENLEQIKKIRENCNLKLELGGGIRDEETIKMYLDLGIDRLILGSIAVKDPKFVREMAAKYPIVVGIDAIDGMVAVEGWGEVSDMKATDLAKEFADAGVEAIICTDVGRDGMMTGVNIDFTLAIKEASGLETIASGGLKDMTDINALIEAGIDGTIVGKAFYEGTLDLEEAFRTVNAG.

D8 acts as the Proton acceptor in catalysis. Residue D127 is the Proton donor of the active site.

It belongs to the HisA/HisF family.

The protein localises to the cytoplasm. The catalysed reaction is 1-(5-phospho-beta-D-ribosyl)-5-[(5-phospho-beta-D-ribosylamino)methylideneamino]imidazole-4-carboxamide = 5-[(5-phospho-1-deoxy-D-ribulos-1-ylimino)methylamino]-1-(5-phospho-beta-D-ribosyl)imidazole-4-carboxamide. The protein operates within amino-acid biosynthesis; L-histidine biosynthesis; L-histidine from 5-phospho-alpha-D-ribose 1-diphosphate: step 4/9. The polypeptide is 1-(5-phosphoribosyl)-5-[(5-phosphoribosylamino)methylideneamino] imidazole-4-carboxamide isomerase (Sulfurovum sp. (strain NBC37-1)).